Here is a 305-residue protein sequence, read N- to C-terminus: N-acyl-aromatic-L-amino acid amidohydrolase (carboxylate-forming) (305 aa).

Zn(2+)-binding residues include H15 and E18. Substrate is bound by residues R57 and 64-65 (NR). H108 provides a ligand contact to Zn(2+). Substrate contacts are provided by E171 and Y281.

The protein belongs to the AspA/AstE family. Aspartoacylase subfamily. In terms of assembly, homotetramer. Zn(2+) is required as a cofactor.

The protein localises to the apical cell membrane. Its subcellular location is the cytoplasm. It catalyses the reaction an N-acyl-aromatic L-alpha-amino acid + H2O = an aromatic L-alpha-amino acid + a carboxylate. It carries out the reaction an N-acetyl-L-cysteine-S-conjugate + H2O = an S-substituted L-cysteine + acetate. Functionally, plays an important role in deacetylating mercapturic acids in kidney proximal tubules. The chain is N-acyl-aromatic-L-amino acid amidohydrolase (carboxylate-forming) (acy3) from Xenopus laevis (African clawed frog).